The chain runs to 136 residues: MVCLFLGASSFIWSLAPAAAAFQLPRCQLLNQTISLEKRGCSGCHRVETTICSGYCATKDPNYKTSYNKAIQHVCTYGDLYYKTFEFPECVPGVDPVVTYPVALSCRCGGCAMATSDCTFESLQPDFCMNDIPFYH.

The N-terminal stretch at 1–21 is a signal peptide; sequence MVCLFLGASSFIWSLAPAAAA. Intrachain disulfides connect cysteine 27/cysteine 75, cysteine 41/cysteine 90, cysteine 44/cysteine 128, cysteine 52/cysteine 106, cysteine 56/cysteine 108, and cysteine 111/cysteine 118. N-linked (GlcNAc...) asparagine glycosylation is present at asparagine 31.

It belongs to the glycoprotein hormones subunit beta family. Heterodimer of an alpha and a beta chain.

The protein localises to the secreted. In terms of biological role, involved in gametogenesis and steroidogenesis. The sequence is that of Gonadotropin subunit beta-2 (cgbb) from Fundulus heteroclitus (Killifish).